Reading from the N-terminus, the 316-residue chain is Transcription termination/antitermination protein NusG (316 aa).

This sequence belongs to the NusG family.

Functionally, participates in transcription elongation, termination and antitermination. This is Transcription termination/antitermination protein NusG from Mycoplasma genitalium (strain ATCC 33530 / DSM 19775 / NCTC 10195 / G37) (Mycoplasmoides genitalium).